A 132-amino-acid polypeptide reads, in one-letter code: DNA-directed RNA polymerase subunit omega (132 aa).

It belongs to the RNA polymerase subunit omega family. As to quaternary structure, the RNAP catalytic core consists of 2 alpha, 1 beta, 1 beta' and 1 omega subunit. When a sigma factor is associated with the core the holoenzyme is formed, which can initiate transcription.

The catalysed reaction is RNA(n) + a ribonucleoside 5'-triphosphate = RNA(n+1) + diphosphate. Functionally, promotes RNA polymerase assembly. Latches the N- and C-terminal regions of the beta' subunit thereby facilitating its interaction with the beta and alpha subunits. The protein is DNA-directed RNA polymerase subunit omega of Bartonella bacilliformis (strain ATCC 35685 / KC583 / Herrer 020/F12,63).